Reading from the N-terminus, the 235-residue chain is Proteasome subunit alpha type-2-A (235 aa).

Lysine 64 participates in a covalent cross-link: Glycyl lysine isopeptide (Lys-Gly) (interchain with G-Cter in ubiquitin).

This sequence belongs to the peptidase T1A family. As to quaternary structure, component of the 20S core complex of the 26S proteasome. The 26S proteasome is composed of a core protease (CP), known as the 20S proteasome, capped at one or both ends by the 19S regulatory particle (RP/PA700). The 20S proteasome core is composed of 28 subunits that are arranged in four stacked rings, resulting in a barrel-shaped structure. The two end rings are each formed by seven alpha subunits, and the two central rings are each formed by seven beta subunits. The catalytic chamber with the active sites is on the inside of the barrel.

Its subcellular location is the cytoplasm. It is found in the nucleus. Functionally, the proteasome is a multicatalytic proteinase complex which is characterized by its ability to cleave peptides with Arg, Phe, Tyr, Leu, and Glu adjacent to the leaving group at neutral or slightly basic pH. The proteasome has an ATP-dependent proteolytic activity. The sequence is that of Proteasome subunit alpha type-2-A (PAB1) from Arabidopsis thaliana (Mouse-ear cress).